Here is a 179-residue protein sequence, read N- to C-terminus: Large ribosomal subunit protein bL27c (179 aa).

The transit peptide at 1–51 (MAVSFSLVGAFKGLSLASSSSFLKGDFGAAFPVAPKFSVSFPLKSPLTIES) directs the protein to the chloroplast.

The protein belongs to the bacterial ribosomal protein bL27 family. Part of the 50S ribosomal subunit.

It localises to the plastid. The protein resides in the chloroplast. In Nicotiana tabacum (Common tobacco), this protein is Large ribosomal subunit protein bL27c (RPL27).